A 118-amino-acid polypeptide reads, in one-letter code: NADH-ubiquinone oxidoreductase chain 3 (118 aa).

The next 3 helical transmembrane spans lie at Ile9–Ala29, Leu62–Val82, and Ile87–Leu107.

Belongs to the complex I subunit 3 family.

The protein resides in the mitochondrion membrane. It carries out the reaction a ubiquinone + NADH + 5 H(+)(in) = a ubiquinol + NAD(+) + 4 H(+)(out). Core subunit of the mitochondrial membrane respiratory chain NADH dehydrogenase (Complex I) that is believed to belong to the minimal assembly required for catalysis. Complex I functions in the transfer of electrons from NADH to the respiratory chain. The immediate electron acceptor for the enzyme is believed to be ubiquinone. The polypeptide is NADH-ubiquinone oxidoreductase chain 3 (NAD3) (Pinus sylvestris (Scotch pine)).